A 1008-amino-acid chain; its full sequence is Chitin synthase C (1008 aa).

The segment at 1–160 (MIYEMMVMKR…GGRTIDPNNR (160 aa)) is disordered. A compositionally biased stretch (low complexity) spans 10 to 19 (RSANSRAQNN). Residues 34-45 (ESPSRPVSSLGN) show a composition bias toward polar residues. Asn-312 carries N-linked (GlcNAc...) asparagine glycosylation. 5 helical membrane passes run 642-662 (FMQLIFTYFGLANFYLVFYFI), 682-702 (IFVILRYACILVMCLQFIISM), 717-737 (IIVYSIIMFYTIFCTMYLVVI), 755-775 (LFVNIVMSLLSTVGLYFYASF), and 787-807 (SAAYFIMLPSYICTLQVYAFC). Asn-833 is a glycosylation site (N-linked (GlcNAc...) asparagine). 2 helical membrane passes run 887 to 907 (MVSIWMVANVILAMAISEVYG) and 910 to 930 (AGGTNIYLAIILWSVVVLALI). Residue Asn-961 is glycosylated (N-linked (GlcNAc...) asparagine).

The protein belongs to the chitin synthase family. Class II subfamily.

It localises to the cell membrane. It catalyses the reaction [(1-&gt;4)-N-acetyl-beta-D-glucosaminyl](n) + UDP-N-acetyl-alpha-D-glucosamine = [(1-&gt;4)-N-acetyl-beta-D-glucosaminyl](n+1) + UDP + H(+). Functionally, polymerizes chitin, a structural polymer of the cell wall and septum, by transferring the sugar moiety of UDP-GlcNAc to the non-reducing end of the growing chitin polymer. Involved in cell wall integrity and mycelial morphology. Plays an important role in septal growth or maintenance. Acts as a positive regulator of conidiation, cellular responses to oxidative stresses, and the production of malic acid. Negatively regulates the citric acid production. The protein is Chitin synthase C of Aspergillus niger (strain ATCC MYA-4892 / CBS 513.88 / FGSC A1513).